We begin with the raw amino-acid sequence, 680 residues long: Pilus tip adhesin Cpa (680 aa).

A cross-link (isoglutamyl cysteine thioester (Cys-Gln)) is located at residues 62-211 (CFNLTKHFPS…IFQSSDKTFQ (150 aa)). The segment at 217-236 (EYVPDTPPKPGEEPPAKTEK) is disordered. Residues 226–236 (PGEEPPAKTEK) show a composition bias toward basic and acidic residues. The isoaspartyl lysine isopeptide (Lys-Asp) cross-link spans 243–546 (KYAEGDYSKL…ELIDVISMED (304 aa)). Positions 253-311 (LEGATLKLAQIEGSGFQEKIFDSNKSGEKVELPNGTYVLSELKPPQGYGVATPITFKVA) constitute a CNA-B domain. Residues 374–526 (CFNADLHSPP…FFVPNSSRYQ (153 aa)) constitute a cross-link (isoglutamyl cysteine thioester (Cys-Gln)). A cross-link (isoaspartyl lysine isopeptide (Lys-Asn)) is located at residues 562-667 (KTVTGTIADK…KEDETVAFEN (106 aa)). The VPPTG sorting signal motif lies at 672-676 (VPPTG). Residue threonine 675 forms a Threonyl lysine isopeptide (Thr-Lys) (interchain with K-? in major pilin subunit) linkage. The propeptide at 676-680 (GLTTD) is removed by sortase.

In terms of assembly, monomer. Post-translationally, proteolytically processed and assembled in pili through a transpeptidation reaction catalyzed by a sortase, which leads to a covalent link between Cpa and a major pilin subunit.

It localises to the fimbrium. Functionally, component of the pilus tip. Can bind covalently, via its two reactive thioester bonds, to molecular targets from host cell surface and can thus mediate adhesion of the streptococcal pili to host cells. Lysine side chains or a carbohydrate with a free amine group might be candidates for Cpa binding. In vitro, can covalently bind to spermidine, but it is unlikely that spermidine is the natural target of Cpa. The polypeptide is Pilus tip adhesin Cpa (cpa) (Streptococcus pyogenes).